Consider the following 363-residue polypeptide: Carbamoyl phosphate synthase small chain (363 aa).

The segment at 1-172 (MTKRILMLED…AFASPGDGKR (172 aa)) is CPSase. Residues S46, G220, and G222 each coordinate L-glutamine. The Glutamine amidotransferase type-1 domain occupies 172–359 (RVVLVDYGVK…MEMMNGKEEG (188 aa)). C247 serves as the catalytic Nucleophile. L248, Q251, N289, G291, and Y292 together coordinate L-glutamine. Active-site residues include H332 and E334.

Belongs to the CarA family. Composed of two chains; the small (or glutamine) chain promotes the hydrolysis of glutamine to ammonia, which is used by the large (or ammonia) chain to synthesize carbamoyl phosphate. Tetramer of heterodimers (alpha,beta)4.

It catalyses the reaction hydrogencarbonate + L-glutamine + 2 ATP + H2O = carbamoyl phosphate + L-glutamate + 2 ADP + phosphate + 2 H(+). The enzyme catalyses L-glutamine + H2O = L-glutamate + NH4(+). The protein operates within amino-acid biosynthesis; L-arginine biosynthesis; carbamoyl phosphate from bicarbonate: step 1/1. It participates in pyrimidine metabolism; UMP biosynthesis via de novo pathway; (S)-dihydroorotate from bicarbonate: step 1/3. Functionally, small subunit of the glutamine-dependent carbamoyl phosphate synthetase (CPSase). CPSase catalyzes the formation of carbamoyl phosphate from the ammonia moiety of glutamine, carbonate, and phosphate donated by ATP, constituting the first step of 2 biosynthetic pathways, one leading to arginine and/or urea and the other to pyrimidine nucleotides. The small subunit (glutamine amidotransferase) binds and cleaves glutamine to supply the large subunit with the substrate ammonia. The sequence is that of Carbamoyl phosphate synthase small chain from Listeria monocytogenes serovar 1/2a (strain ATCC BAA-679 / EGD-e).